The following is a 218-amino-acid chain: Adenylate kinase (218 aa).

10–15 (GAGKGT) is a binding site for ATP. An NMP region spans residues 30–59 (STGDMLRAAVKAGTPLGVEAKKIMDAGALV). AMP-binding positions include Thr31, Arg36, 57-59 (ALV), 85-88 (GFPR), and Gln92. Positions 122–159 (GRRSHTASGRTYHVKYNPPKVEGKDDVTGEPLIQREDD) are LID. ATP contacts are provided by residues Arg123 and 132 to 133 (TY). Residues Arg156 and Arg167 each coordinate AMP. Residue Gly203 participates in ATP binding.

It belongs to the adenylate kinase family. In terms of assembly, monomer.

The protein resides in the cytoplasm. The enzyme catalyses AMP + ATP = 2 ADP. It functions in the pathway purine metabolism; AMP biosynthesis via salvage pathway; AMP from ADP: step 1/1. In terms of biological role, catalyzes the reversible transfer of the terminal phosphate group between ATP and AMP. Plays an important role in cellular energy homeostasis and in adenine nucleotide metabolism. This Polaromonas sp. (strain JS666 / ATCC BAA-500) protein is Adenylate kinase.